The chain runs to 271 residues: CAAX prenyl protease 2 (271 aa).

Over 1 to 9 (MISSYKYNP) the chain is Extracellular. A helical transmembrane segment spans residues 10–30 (KLYFLSTFVVTYILWFTGAYL). Over 31-38 (SFSSTYSG) the chain is Cytoplasmic. The helical transmembrane segment at 39–59 (IYMLIMLPGLMAPFIISTILI) threads the bilayer. Residues 60-82 (AKSKNNELKKDFINRLFNLKLIN) lie on the Extracellular side of the membrane. The chain crosses the membrane as a helical span at residues 83–105 (LKTIPVVFLLMPAVILLSILLSI). Residues 106–125 (PFGGSISQFQFSGGFSFSTD) lie on the Cytoplasmic side of the membrane. A helical membrane pass occupies residues 126-149 (FVPVLFLLLLAATFEELGWRGYAF). Glu140 functions as the Proton donor/acceptor in the catalytic mechanism. Residues 150–159 (DSLQSRYSLF) lie on the Extracellular side of the membrane. A helical membrane pass occupies residues 160–179 (KASILFGIFWSLWHFPLIFV). Residue His173 is the Proton donor/acceptor of the active site. Residues 180–192 (NNSYQYEIFNQSI) lie on the Cytoplasmic side of the membrane. The chain crosses the membrane as a helical span at residues 193–213 (WYGLNFFLSILPMGIIITWMC). The Extracellular portion of the chain corresponds to 214-219 (LKNRKS). The helical transmembrane segment at 220 to 237 (IILAIIFHFLINLNQELL) threads the bilayer. Over 238–243 (AITQDT) the chain is Cytoplasmic. A helical membrane pass occupies residues 244–263 (KIIETGVLFLVAAAIILYDK). Over 264–271 (KMFFEKLG) the chain is Extracellular.

This sequence belongs to the peptidase U48 family.

Its subcellular location is the cell membrane. The catalysed reaction is Hydrolyzes the peptide bond -P2-(S-farnesyl or geranylgeranyl)C-P1'-P2'-P3'-COOH where P1' and P2' are amino acids with aliphatic sidechains and P3' is any C-terminal residue.. Its activity is regulated as follows. Activity is unaffected by metalloprotease inhibitors 5 mM EDTA and 5 mM Zn(2+). Activity partially inhibited by 1,10-phenanthroline and 1,7-phenanthroline. Its function is as follows. Protease involved in the processing of a variety of prenylated proteins containing the C-terminal CAAX motif, where C is a cysteine modified with an isoprenoid lipid, A is an aliphatic amino acid and X is any C-terminal amino acid. Proteolytically removes the C-terminal three residues of farnesylated proteins, leaving the prenylated cysteine as the new C-terminus. Hydrolysis depends on a farnesylated cysteine residue and no activity is shown towards geranylgeranylated peptides. The chain is CAAX prenyl protease 2 from Methanococcus maripaludis (strain DSM 14266 / JCM 13030 / NBRC 101832 / S2 / LL).